The chain runs to 572 residues: 2-isopropylmalate synthase (572 aa).

One can recognise a Pyruvate carboxyltransferase domain in the interval 31–305; it reads PIWMSTDLRD…DPGLDFSNIN (275 aa). The Mg(2+) site is built by Asp-40, His-244, His-246, and Asn-280. The tract at residues 437 to 572 is regulatory domain; that stretch reads NTAPIHYVGH…MNDAAESVGV (136 aa).

It belongs to the alpha-IPM synthase/homocitrate synthase family. LeuA type 2 subfamily. Homodimer. Mg(2+) serves as cofactor.

It is found in the cytoplasm. The catalysed reaction is 3-methyl-2-oxobutanoate + acetyl-CoA + H2O = (2S)-2-isopropylmalate + CoA + H(+). It functions in the pathway amino-acid biosynthesis; L-leucine biosynthesis; L-leucine from 3-methyl-2-oxobutanoate: step 1/4. Catalyzes the condensation of the acetyl group of acetyl-CoA with 3-methyl-2-oxobutanoate (2-ketoisovalerate) to form 3-carboxy-3-hydroxy-4-methylpentanoate (2-isopropylmalate). In Paraburkholderia phytofirmans (strain DSM 17436 / LMG 22146 / PsJN) (Burkholderia phytofirmans), this protein is 2-isopropylmalate synthase.